A 264-amino-acid polypeptide reads, in one-letter code: NAD kinase 1 (264 aa).

D45 functions as the Proton acceptor in the catalytic mechanism. NAD(+) is bound by residues 45–46 (DG), 122–123 (NE), R148, D150, 161–166 (TAYNKS), and A185.

It belongs to the NAD kinase family. The cofactor is a divalent metal cation.

The protein localises to the cytoplasm. The catalysed reaction is NAD(+) + ATP = ADP + NADP(+) + H(+). In terms of biological role, involved in the regulation of the intracellular balance of NAD and NADP, and is a key enzyme in the biosynthesis of NADP. Catalyzes specifically the phosphorylation on 2'-hydroxyl of the adenosine moiety of NAD to yield NADP. The sequence is that of NAD kinase 1 from Listeria monocytogenes serotype 4b (strain F2365).